The following is an 88-amino-acid chain: Small ribosomal subunit protein bS20 (88 aa).

Residues 1 to 23 are disordered; it reads MANSPQAKKRARQNDKARAHNAS.

It belongs to the bacterial ribosomal protein bS20 family.

In terms of biological role, binds directly to 16S ribosomal RNA. The protein is Small ribosomal subunit protein bS20 of Teredinibacter turnerae (strain ATCC 39867 / T7901).